The sequence spans 298 residues: Mitochondrial 2-oxodicarboxylate carrier (298 aa).

3 Solcar repeats span residues 10-99 (HETS…YKKF), 106-195 (SPGL…VKNI), and 204-293 (LEFL…TYAW). The next 6 membrane-spanning stretches (helical) occupy residues 16–36 (VAAGGSAGLVEICLMHPLDVV), 69–88 (FGFYKGIIPPILAETPKRAV), 112–132 (LIAGLGSGLTEAVVVNPFEVV), 166–186 (GLNKGLTATLGRHGIFNMVYF), 204–224 (LEFLRKFGIGFVSGTMGSVFN), and 276–296 (LGPGGGVMLLVYEYTYAWLQE).

Belongs to the mitochondrial carrier (TC 2.A.29) family.

It localises to the mitochondrion inner membrane. It catalyses the reaction 2-oxoadipate(in) + 2-oxoglutarate(out) = 2-oxoadipate(out) + 2-oxoglutarate(in). The enzyme catalyses hexanedioate(in) + 2-oxoglutarate(out) = hexanedioate(out) + 2-oxoglutarate(in). The catalysed reaction is L-2-aminoadipate(in) + 2-oxoglutarate(out) = L-2-aminoadipate(out) + 2-oxoglutarate(in). It carries out the reaction glutarate(in) + 2-oxoglutarate(out) = glutarate(out) + 2-oxoglutarate(in). It catalyses the reaction 2-oxoheptanedioate(in) + 2-oxoglutarate(out) = 2-oxoheptanedioate(out) + 2-oxoglutarate(in). The enzyme catalyses heptanedioate(in) + 2-oxoglutarate(out) = heptanedioate(out) + 2-oxoglutarate(in). The catalysed reaction is citrate(in) + 2-oxoglutarate(out) = citrate(out) + 2-oxoglutarate(in). Transports dicarboxylates across the inner membranes of mitochondria by a counter-exchange mechanism. Can transport 2-oxoadipate (2-oxohexanedioate), 2-oxoglutarate, adipate (hexanedioate), glutarate, and to a lesser extent, pimelate (heptanedioate), 2-oxopimelate (2-oxoheptanedioate), 2-aminoadipate (2-aminohexanedioate), oxaloacetate, and citrate. Plays a central role in catabolism of lysine, hydroxylysine, and tryptophan, by transporting common metabolite intermediates (such as 2-oxoadipate) into the mitochondria, where it is converted into acetyl-CoA and can enter the citric acid (TCA) cycle. This chain is Mitochondrial 2-oxodicarboxylate carrier (Slc25a21), found in Mus musculus (Mouse).